Here is a 430-residue protein sequence, read N- to C-terminus: DNA polymerase IV 1 (430 aa).

The 181-residue stretch at 45 to 225 (LAHIDCDAFY…KPVTLIWGVG (181 aa)) folds into the UmuC domain. Residues Asp-49 and Asp-142 each contribute to the Mg(2+) site. Glu-143 is a catalytic residue.

It belongs to the DNA polymerase type-Y family. In terms of assembly, monomer. Mg(2+) is required as a cofactor.

The protein localises to the cytoplasm. It carries out the reaction DNA(n) + a 2'-deoxyribonucleoside 5'-triphosphate = DNA(n+1) + diphosphate. Poorly processive, error-prone DNA polymerase involved in untargeted mutagenesis. Copies undamaged DNA at stalled replication forks, which arise in vivo from mismatched or misaligned primer ends. These misaligned primers can be extended by PolIV. Exhibits no 3'-5' exonuclease (proofreading) activity. May be involved in translesional synthesis, in conjunction with the beta clamp from PolIII. This chain is DNA polymerase IV 1 (dinB1), found in Rhizobium meliloti (strain 1021) (Ensifer meliloti).